The primary structure comprises 278 residues: MKFRAKITGKGCLELFIHVSGTVARLAKVCVLRVRPDSLCFGPAGSGGLHEARLWCEVRQGAFQQFRMEGVSEDLDEIHLELTAEHLSRAARSAAGASSLKLQLTHKRRPSLTVAVELVSSLGRARSVVHDLPVRVLPRRVWRDCLPPSLRASDASIRLPRWRTLRSIVERMANVGSHVLVEANLSGRMTLSIETEVVSIQSYFKNLGNPPQSAVGVPENRDLESMVQVRVDNRKLLQFLEGQQIHPTTALCNIWDNTLLQLVLVQEDVSLQYFIPAL.

The protein belongs to the HUS1 family. In terms of assembly, interacts with RAD1 and RAD9B. Expressed strongly in testis, less in spleen, thymus, prostate, colon and leukocytes.

The polypeptide is Checkpoint protein HUS1B (HUS1B) (Homo sapiens (Human)).